We begin with the raw amino-acid sequence, 93 residues long: Small ribosomal subunit protein uS19 (93 aa).

It belongs to the universal ribosomal protein uS19 family.

Its function is as follows. Protein S19 forms a complex with S13 that binds strongly to the 16S ribosomal RNA. The sequence is that of Small ribosomal subunit protein uS19 (rpsS) from Mycobacterium leprae (strain TN).